We begin with the raw amino-acid sequence, 274 residues long: tRNA-cytidine(32) 2-sulfurtransferase (274 aa).

The PP-loop motif motif lies at 40-45 (SGGKDS). Positions 115, 118, and 206 each coordinate [4Fe-4S] cluster.

The protein belongs to the TtcA family. In terms of assembly, homodimer. Mg(2+) is required as a cofactor. Requires [4Fe-4S] cluster as cofactor.

The protein localises to the cytoplasm. The enzyme catalyses cytidine(32) in tRNA + S-sulfanyl-L-cysteinyl-[cysteine desulfurase] + AH2 + ATP = 2-thiocytidine(32) in tRNA + L-cysteinyl-[cysteine desulfurase] + A + AMP + diphosphate + H(+). The protein operates within tRNA modification. Its function is as follows. Catalyzes the ATP-dependent 2-thiolation of cytidine in position 32 of tRNA, to form 2-thiocytidine (s(2)C32). The sulfur atoms are provided by the cysteine/cysteine desulfurase (IscS) system. The chain is tRNA-cytidine(32) 2-sulfurtransferase from Pseudomonas paraeruginosa (strain DSM 24068 / PA7) (Pseudomonas aeruginosa (strain PA7)).